Reading from the N-terminus, the 147-residue chain is Large ribosomal subunit protein uL15 (147 aa).

The interval 1–45 (MTIKLHHLRPAPGAKSDKIRVGRGEGGKRGKTAGRGTKGTKARKN) is disordered. The span at 15–28 (KSDKIRVGRGEGGK) shows a compositional bias: basic and acidic residues.

The protein belongs to the universal ribosomal protein uL15 family. In terms of assembly, part of the 50S ribosomal subunit.

Functionally, binds to the 23S rRNA. This Rhodococcus jostii (strain RHA1) protein is Large ribosomal subunit protein uL15.